A 399-amino-acid polypeptide reads, in one-letter code: Tyrosine--tRNA ligase (399 aa).

Residue Tyr-36 coordinates L-tyrosine. The 'HIGH' region signature appears at 41-50; sequence PTAPSLHIGN. L-tyrosine-binding residues include Tyr-166 and Gln-170. Positions 226-230 match the 'KMSKS' region motif; the sequence is KMGKS. ATP is bound at residue Lys-229. Residues 332–395 form the S4 RNA-binding domain; sequence TRLVDVIVDL…KKRFVTVQVI (64 aa).

It belongs to the class-I aminoacyl-tRNA synthetase family. TyrS type 1 subfamily. In terms of assembly, homodimer.

It localises to the cytoplasm. The catalysed reaction is tRNA(Tyr) + L-tyrosine + ATP = L-tyrosyl-tRNA(Tyr) + AMP + diphosphate + H(+). Catalyzes the attachment of tyrosine to tRNA(Tyr) in a two-step reaction: tyrosine is first activated by ATP to form Tyr-AMP and then transferred to the acceptor end of tRNA(Tyr). The protein is Tyrosine--tRNA ligase of Mycoplasma pneumoniae (strain ATCC 29342 / M129 / Subtype 1) (Mycoplasmoides pneumoniae).